The sequence spans 249 residues: Low affinity immunoglobulin gamma Fc region receptor III-A (249 aa).

An N-terminal signal peptide occupies residues 1-20; that stretch reads MWQLLLPTALVLTAFSGIQA. At 21 to 203 the chain is on the extracellular side; the sequence is GLQKAVVNLD…SPSMFPPWHQ (183 aa). Ig-like C2-type domains are found at residues 22–102 and 119–188; these read LQKA…VQLE and EGDP…FRIS. Cystine bridges form between cysteine 46-cysteine 88 and cysteine 127-cysteine 171. Residues asparagine 62, asparagine 164, and asparagine 179 are each glycosylated (N-linked (GlcNAc...) asparagine). A helical membrane pass occupies residues 204–224; that stretch reads ITFCLLIGLLFAIDTVLYFSV. At 225 to 249 the chain is on the cytoplasmic side; that stretch reads RRGLQSPVADYEEPKIQWSKEPQDK. Position 235 is a phosphotyrosine (tyrosine 235).

As to quaternary structure, forms a heterooligomeric complex with ITAM-containing signaling subunits FCER1G. Interacts (via transmembrane domain) with signaling subunits; this interaction is a prerequisite for receptor complex expression on the cell surface and intracellular signal transduction. Binds the Fc region of antigen-complexed IgG. N-glycosylated. In terms of processing, phosphorylated following receptor ligation. In terms of tissue distribution, detected on myeloid cells, peripheral blood monocytes, splenic and bone marrow dendritic cells, and thioglycollate-elicited macrophages and neutrophils but absent from lymphoid populations with no expression observed on T cells, B cells, NK cells or other granulocytes (at protein level). Expressed in peripheral blood leukocytes, spleen, liver, thymus and small intestine. Expressed in splenic dendritic cell subsets (at protein level).

The protein localises to the cell membrane. In terms of biological role, receptor for the invariable Fc fragment of immunoglobulin gamma (IgG). Binds with intermediate affinity to both IgG2a and IgG2b. Can bind to IgG2a and IgG2b monomers. Does not display binding to IgG1 or IgG3. Recognizes neutralizing virus-specific IgGs displayed on the cell surface of infected cells and triggers antibody-dependent cellular cytotoxicity (ADCC). Confers protection to lethal influenza virus infection. On splenic dendritic cells, uptakes antigen immune complexes and efficiently divert them into MHC class I and II antigen presentation pathways to provide for superior priming of CD4-positive and CD8-positive T cell immune responses. Mediates neutrophil activation by IgG complexes redundantly with FCGR2A. Plays a role in promoting bone resorption by enhancing osteoclast differentiation following binding to IgG2a. Also acts as a receptor for the Fc region of immunoglobulin epsilon (IgE). Binds with low affinity to both the a and b allotypes of IgE. Has also been shown to bind to IgE allotype a only but not to allotype b. Binds aggregated IgE but not the monomeric form and bound monomeric IgG is readily displaced by IgE complexes. Binding to IgE promotes macrophage-mediated phagocytosis, antigen presentation to T cells, production of pro-inflammatory cytokines and the late phase of cutaneous allergic reactions. Mediates enhanced ADCC in response to afucosylated IgGs. In Mus musculus (Mouse), this protein is Low affinity immunoglobulin gamma Fc region receptor III-A.